The primary structure comprises 827 residues: NT-3 growth factor receptor (827 aa).

The first 31 residues, 1-31 (MDVSLCPTKCTFWRVFLLWSIWGDYLLSVLA), serve as a signal peptide directing secretion. 2 cysteine pairs are disulfide-bonded: cysteine 32/cysteine 38 and cysteine 36/cysteine 45. The Extracellular portion of the chain corresponds to 32–430 (CPANCLCSKT…ITVTHKPEED (399 aa)). N-linked (GlcNAc...) asparagine glycosylation is found at asparagine 68, asparagine 72, and asparagine 79. 2 LRR repeats span residues 104–125 (GLQR…AFAK) and 128–149 (HLRY…LFQT). The 50-residue stretch at 160-209 (NPFNCSCDIRWIQLWQEKGEANLQSQQLHCMNLDTAVILLRNMNITQCDL) folds into the LRRCT domain. N-linked (GlcNAc...) asparagine glycosylation occurs at asparagine 163. Disulfide bonds link cysteine 164–cysteine 189 and cysteine 166–cysteine 207. Asparagine 203, asparagine 218, asparagine 232, asparagine 259, asparagine 267, asparagine 272, and asparagine 294 each carry an N-linked (GlcNAc...) asparagine glycan. Ig-like C2-type domains lie at 210-300 (PEIS…VLLT) and 319-382 (HCIA…VATN). Cysteine 231 and cysteine 284 form a disulfide bridge. Cysteine 320 and cysteine 362 are oxidised to a cystine. N-linked (GlcNAc...) asparagine glycans are attached at residues asparagine 375 and asparagine 388. Residues 431–455 (TFGVSIAVGLAAFACVLLVVLFIMI) traverse the membrane as a helical segment. Topologically, residues 456–827 (NKYGRRSKFG…ATPIYLDILG (372 aa)) are cytoplasmic. Phosphotyrosine; by autocatalysis is present on tyrosine 518. Residues 540–812 (IVLKRELGEG…LNIKEIYKIL (273 aa)) form the Protein kinase domain. Residues 546-554 (LGEGAFGKV) and lysine 574 contribute to the ATP site. The active-site Proton acceptor is the aspartate 681. 4 positions are modified to phosphotyrosine; by autocatalysis: tyrosine 707, tyrosine 711, tyrosine 712, and tyrosine 822.

Belongs to the protein kinase superfamily. Tyr protein kinase family. Insulin receptor subfamily. As to quaternary structure, exists in a dynamic equilibrium between monomeric (low affinity) and dimeric (high affinity) structures. Interacts with PTPRS. Ligand-mediated auto-phosphorylation.

The protein resides in the membrane. The enzyme catalyses L-tyrosyl-[protein] + ATP = O-phospho-L-tyrosyl-[protein] + ADP + H(+). Functionally, receptor tyrosine kinase involved in nervous system and probably heart development. Upon binding of its ligand NTF3/neurotrophin-3, NTRK3 autophosphorylates and activates different signaling pathways, including the phosphatidylinositol 3-kinase/AKT and the MAPK pathways, that control cell survival and differentiation. The KT and KD isoforms fail to stimulate transformation, process outgrowth or survival. Isoform KI25 exhibits tyrosine phosphorylation in the absence of ligand and is unable to mediate survival of neuronal cells. The chain is NT-3 growth factor receptor (NTRK3) from Gallus gallus (Chicken).